We begin with the raw amino-acid sequence, 738 residues long: Leucine-rich repeat flightless-interacting protein 1 (738 aa).

Thr-2 is subject to N-acetylthreonine. Ser-16 bears the Phosphoserine mark. Positions 40–65 (IRMKELERQQKEVEERPDKDFAEKGS) are enriched in basic and acidic residues. The disordered stretch occupies residues 40–98 (IRMKELERQQKEVEERPDKDFAEKGSRNMPSLSAATLASLGGTSSRRGSGDTSISMDTE). Low complexity predominate over residues 78–94 (SLGGTSSRRGSGDTSIS). Phosphoserine occurs at positions 83, 84, 88, and 92. Residues 94-194 (SMDTEASIRE…LRQREEMLEK (101 aa)) adopt a coiled-coil conformation. Residue Lys-249 forms a Glycyl lysine isopeptide (Lys-Gly) (interchain with G-Cter in SUMO1) linkage. 2 stretches are compositionally biased toward basic and acidic residues: residues 253 to 262 (VEKVGQRETL) and 277 to 297 (DCVD…RPVE). The interval 253–738 (VEKVGQRETL…SKSKEDCTMS (486 aa)) is disordered. Phosphoserine is present on Ser-302. Over residues 314–326 (EVQSQDQENTSIL) the composition is skewed to polar residues. The segment covering 330-347 (EQIESHEVTNKSDSRDSN) has biased composition (basic and acidic residues). A phosphoserine mark is found at Ser-346 and Ser-348. Polar residues predominate over residues 371–380 (KNQSENSMDS). Composition is skewed to basic and acidic residues over residues 381–400 (QGKE…RPDH) and 467–476 (SERELAHEAA). A DNA-binding region spans residues 479-580 (EEALTQSSQA…KNKKKKAAAP (102 aa)). Polar residues-rich tracts occupy residues 483 to 495 (TQSS…NTVT) and 520 to 534 (TVQS…PGST). The span at 535–553 (DTKHTSPHAKERNKAKSEQ) shows a compositional bias: basic and acidic residues. Residues Ser-551 and Ser-560 each carry the phosphoserine modification. Residues 563 to 577 (KKTKNKKKKNKKKKA) show a composition bias toward basic residues. A compositionally biased stretch (basic and acidic residues) spans 606–626 (RVQATDKKWAAETPELKEDPQ). A phosphoserine mark is found at Ser-675 and Ser-701. Basic and acidic residues-rich tracts occupy residues 691 to 703 (QADE…HSVD) and 720 to 738 (EQAR…CTMS).

It belongs to the LRRFIP family. As to quaternary structure, homodimer. May also form higher oligomers. Interacts with FLII. Interacts with MYD88. Competes with FLII for MyD88-binding, even in the absence of LPS.

Its subcellular location is the nucleus. It is found in the cytoplasm. In terms of biological role, transcriptional repressor which preferentially binds to the GC-rich consensus sequence (5'-AGCCCCCGGCG-3') and may regulate expression of TNF, EGFR and PDGFA. May control smooth muscle cells proliferation following artery injury through PDGFA repression. May also bind double-stranded RNA. Positively regulates Toll-like receptor (TLR) signaling in response to agonist probably by competing with the negative FLII regulator for MYD88-binding. This Rattus norvegicus (Rat) protein is Leucine-rich repeat flightless-interacting protein 1 (Lrrfip1).